The primary structure comprises 858 residues: Envelope glycoprotein gp160 (858 aa).

Residues 1–19 (MMNQLLIAILLASACLVYC) form the signal peptide. Residues 20 to 679 (TQYVTVFYGV…LTSWVKYIQY (660 aa)) are Extracellular-facing. Asn34 carries an N-linked (GlcNAc...) asparagine; by host glycan. A disulfide bridge connects residues Cys41 and Cys54. Residues Asn67, Asn76, Asn119, Asn120, Asn151, Asn166, Asn179, Asn192, Asn193, Asn196, Asn206, Asn238, Asn241, Asn248, Asn272, Asn278, Asn289, Asn300, Asn310, Asn367, Asn371, Asn400, Asn410, Asn447, Asn463, and Asn466 are each glycosylated (N-linked (GlcNAc...) asparagine; by host). 5 cysteine pairs are disulfide-bonded: Cys98–Cys214, Cys105–Cys205, Cys110–Cys163, Cys227–Cys257, and Cys237–Cys249. Residues 110 to 162 (CSSTESSTGNNTTSKSTSTTTTTPTDQEQEISEDTPCARADNCSGLGEEETIN) are V1. Low complexity predominate over residues 111–134 (SSTESSTGNNTTSKSTSTTTTTPT). Residues 111 to 142 (SSTESSTGNNTTSKSTSTTTTTPTDQEQEISE) are disordered. Residues 163 to 205 (CQFNMTGLERDKKKQYNETWYSKDVVCETNNSTNQTQCYMNHC) form a V2 region. A V3 region spans residues 305 to 339 (CKRPGNKTVKQIMLMSGHVFHSHYQPINKRPRQAW). A disulfide bridge links Cys305 with Cys340. 2 cysteine pairs are disulfide-bonded: Cys392–Cys446 and Cys399–Cys419. The V4 stretch occupies residues 399–419 (CNMTWFLNWIENKTHRNYAPC). Residues 462-469 (NNQTNITF) form a V5 region. Residues 512–532 (GVFVLGFLGFLATAGSAMGAA) form a fusion peptide region. Residues 575–591 (LQARVTAIEKYLQDQAR) form an immunosuppression region. N-linked (GlcNAc...) asparagine; by host glycans are attached at residues Asn611, Asn620, and Asn636. Residues 624–645 (QEWEKQVRYLEANISKSLEQAQ) adopt a coiled-coil conformation. The tract at residues 657-678 (KLNSWDIFGNWFDLTSWVKYIQ) is MPER; binding to GalCer. A helical membrane pass occupies residues 680–700 (GVLIIVAVIALRIVIYVVQML). Residues 701-858 (SRLRKGYRPV…IRQGAEIALL (158 aa)) are Cytoplasmic-facing. A YXXV motif; contains endocytosis signal motif is present at residues 707-710 (YRPV). Cys773 is lipidated: S-palmitoyl cysteine; by host. Positions 857–858 (LL) match the Di-leucine internalization motif motif.

The mature envelope protein (Env) consists of a homotrimer of non-covalently associated gp120-gp41 heterodimers. The resulting complex protrudes from the virus surface as a spike. There seems to be as few as 10 spikes on the average virion. Interacts with human CD4, CCR5 and CXCR4, to form a P4HB/PDI-CD4-CXCR4-gp120 complex. Gp120 also interacts with the C-type lectins CD209/DC-SIGN and CLEC4M/DC-SIGNR (collectively referred to as DC-SIGN(R)). Gp120 and gp41 interact with GalCer. As to quaternary structure, the mature envelope protein (Env) consists of a homotrimer of non-covalently associated gp120-gp41 heterodimers. The resulting complex protrudes from the virus surface as a spike. There seems to be as few as 10 spikes on the average virion. Specific enzymatic cleavages in vivo yield mature proteins. Envelope glycoproteins are synthesized as an inactive precursor that is heavily N-glycosylated and processed likely by host cell furin in the Golgi to yield the mature SU and TM proteins. The cleavage site between SU and TM requires the minimal sequence [KR]-X-[KR]-R. In terms of processing, palmitoylation of the transmembrane protein and of Env polyprotein (prior to its proteolytic cleavage) is essential for their association with host cell membrane lipid rafts. Palmitoylation is therefore required for envelope trafficking to classical lipid rafts, but not for viral replication.

The protein resides in the virion membrane. Its subcellular location is the host cell membrane. The protein localises to the host endosome membrane. Its function is as follows. The surface protein gp120 (SU) attaches the virus to the host lymphoid cell by binding to the primary receptor CD4. This interaction induces a structural rearrangement creating a high affinity binding site for a chemokine coreceptor like CXCR4 and/or CCR5. This peculiar 2 stage receptor-interaction strategy allows gp120 to maintain the highly conserved coreceptor-binding site in a cryptic conformation, protected from neutralizing antibodies. Since CD4 also displays a binding site for the disulfide-isomerase P4HB/PDI, a P4HB/PDI-CD4-CXCR4-gp120 complex may form. In that complex, P4HB/PDI could reach and reduce gp120 disulfide bonds, causing major conformational changes in gp120. TXN, another PDI family member could also be involved in disulfide rearrangements in Env during fusion. These changes are transmitted to the transmembrane protein gp41 and are thought to activate its fusogenic potential by unmasking its fusion peptide. Functionally, the surface protein gp120 is a ligand for CD209/DC-SIGN and CLEC4M/DC-SIGNR, which are respectively found on dendritic cells (DCs), and on endothelial cells of liver sinusoids and lymph node sinuses. These interactions allow capture of viral particles at mucosal surfaces by these cells and subsequent transmission to permissive cells. DCs are professional antigen presenting cells, critical for host immunity by inducing specific immune responses against a broad variety of pathogens. They act as sentinels in various tissues where they take up antigen, process it, and present it to T-cells following migration to lymphoid organs. HIV subverts the migration properties of dendritic cells to gain access to CD4+ T-cells in lymph nodes. Virus transmission to permissive T-cells occurs either in trans (without DCs infection, through viral capture and transmission), or in cis (following DCs productive infection, through the usual CD4-gp120 interaction), thereby inducing a robust infection. In trans infection, bound virions remain infectious over days and it is proposed that they are not degraded, but protected in non-lysosomal acidic organelles within the DCs close to the cell membrane thus contributing to the viral infectious potential during DCs' migration from the periphery to the lymphoid tissues. On arrival at lymphoid tissues, intact virions recycle back to DCs' cell surface allowing virus transmission to CD4+ T-cells. Virion capture also seems to lead to MHC-II-restricted viral antigen presentation, and probably to the activation of HIV-specific CD4+ cells. The transmembrane protein gp41 (TM) acts as a class I viral fusion protein. Under the current model, the protein has at least 3 conformational states: pre-fusion native state, pre-hairpin intermediate state, and post-fusion hairpin state. During fusion of viral and target intracellular membranes, the coiled coil regions (heptad repeats) assume a trimer-of-hairpins structure, positioning the fusion peptide in close proximity to the C-terminal region of the ectodomain. The formation of this structure appears to drive apposition and subsequent fusion of viral and target cell membranes. Complete fusion occurs in host cell endosomes and is dynamin-dependent, however some lipid transfer might occur at the plasma membrane. The virus undergoes clathrin-dependent internalization long before endosomal fusion, thus minimizing the surface exposure of conserved viral epitopes during fusion and reducing the efficacy of inhibitors targeting these epitopes. Membranes fusion leads to delivery of the nucleocapsid into the cytoplasm. In terms of biological role, the envelope glycoprotein gp160 precursor down-modulates cell surface CD4 antigen by interacting with it in the endoplasmic reticulum and blocking its transport to the cell surface. Its function is as follows. The gp120-gp41 heterodimer seems to contribute to T-cell depletion during HIV-1 infection. The envelope glycoproteins expressed on the surface of infected cells induce apoptosis through an interaction with uninfected cells expressing the receptor (CD4) and the coreceptors CXCR4 or CCR5. This type of bystander killing may be obtained by at least three distinct mechanisms. First, the interaction between the 2 cells can induce cellular fusion followed by nuclear fusion within the syncytium. Syncytia are condemned to die from apoptosis. Second, the 2 interacting cells may not fuse entirely and simply exchange plasma membrane lipids, after a sort of hemifusion process, followed by rapid death. Third, it is possible that virus-infected cells, on the point of undergoing apoptosis, fuse with CD4-expressing cells, in which case apoptosis is rapidly transmitted from one cell to the other and thus occurs in a sort of contagious fashion. Functionally, the gp120-gp41 heterodimer allows rapid transcytosis of the virus through CD4 negative cells such as simple epithelial monolayers of the intestinal, rectal and endocervical epithelial barriers. Both gp120 and gp41 specifically recognize glycosphingolipids galactosyl-ceramide (GalCer) or 3' sulfo-galactosyl-ceramide (GalS) present in the lipid rafts structures of epithelial cells. Binding to these alternative receptors allows the rapid transcytosis of the virus through the epithelial cells. This transcytotic vesicle-mediated transport of virions from the apical side to the basolateral side of the epithelial cells does not involve infection of the cells themselves. The sequence is that of Envelope glycoprotein gp160 (env) from Homo sapiens (Human).